The sequence spans 862 residues: Leucine--tRNA ligase (862 aa).

The short motif at 49 to 59 (PYPSGRIHMGH) is the 'HIGH' region element. A 'KMSKS' region motif is present at residues 625–629 (KMSKS). An ATP-binding site is contributed by Lys-628.

It belongs to the class-I aminoacyl-tRNA synthetase family.

The protein resides in the cytoplasm. It carries out the reaction tRNA(Leu) + L-leucine + ATP = L-leucyl-tRNA(Leu) + AMP + diphosphate. The sequence is that of Leucine--tRNA ligase from Paramagnetospirillum magneticum (strain ATCC 700264 / AMB-1) (Magnetospirillum magneticum).